The sequence spans 65 residues: Large ribosomal subunit protein bL28 (65 aa).

The segment at 1–26 is disordered; it reads MARRDALTGKSALSGQSRSHALNATK. Polar residues predominate over residues 11 to 22; sequence SALSGQSRSHAL.

This sequence belongs to the bacterial ribosomal protein bL28 family.

This chain is Large ribosomal subunit protein bL28, found in Mycoplasma mycoides subsp. mycoides SC (strain CCUG 32753 / NCTC 10114 / PG1).